The primary structure comprises 561 residues: Urocanate hydratase (561 aa).

NAD(+) is bound by residues 52–53, Gln130, 176–178, Glu196, Arg201, 242–243, 267–271, 277–278, and Tyr326; these read GG, GMG, NA, QTSAH, and YL. Cys414 is an active-site residue. NAD(+) is bound at residue Gly496.

The protein belongs to the urocanase family. It depends on NAD(+) as a cofactor.

It is found in the cytoplasm. It catalyses the reaction 4-imidazolone-5-propanoate = trans-urocanate + H2O. It functions in the pathway amino-acid degradation; L-histidine degradation into L-glutamate; N-formimidoyl-L-glutamate from L-histidine: step 2/3. Its function is as follows. Catalyzes the conversion of urocanate to 4-imidazolone-5-propionate. The protein is Urocanate hydratase of Rhizobium rhizogenes (strain K84 / ATCC BAA-868) (Agrobacterium radiobacter).